We begin with the raw amino-acid sequence, 368 residues long: Phospho-N-acetylmuramoyl-pentapeptide-transferase (368 aa).

A run of 9 helical transmembrane segments spans residues 30–50 (AAAITSLLITLLAGPGFIRYL), 72–92 (LPTMGGLLIIFSIEVSVLLWS), 98–118 (HVWLIMLAVLWMGVVGFIDDY), 139–159 (VALGLVVGIYTSLDPAFSVLM), 170–190 (LTIDYGYFYIPVVIFIITALS), 208–228 (AIVVFALGGFAYLAGNAVYAT), 238–258 (GGEIAVVCMAIVMASVGFLWF), 264–286 (EIFMGDTGSLALGSAIAVIALLI), and 345–365 (KIVIRFWIITILFFLTSLMTL).

This sequence belongs to the glycosyltransferase 4 family. MraY subfamily. The cofactor is Mg(2+).

Its subcellular location is the cell inner membrane. It carries out the reaction UDP-N-acetyl-alpha-D-muramoyl-L-alanyl-gamma-D-glutamyl-meso-2,6-diaminopimeloyl-D-alanyl-D-alanine + di-trans,octa-cis-undecaprenyl phosphate = di-trans,octa-cis-undecaprenyl diphospho-N-acetyl-alpha-D-muramoyl-L-alanyl-D-glutamyl-meso-2,6-diaminopimeloyl-D-alanyl-D-alanine + UMP. Its pathway is cell wall biogenesis; peptidoglycan biosynthesis. In terms of biological role, catalyzes the initial step of the lipid cycle reactions in the biosynthesis of the cell wall peptidoglycan: transfers peptidoglycan precursor phospho-MurNAc-pentapeptide from UDP-MurNAc-pentapeptide onto the lipid carrier undecaprenyl phosphate, yielding undecaprenyl-pyrophosphoryl-MurNAc-pentapeptide, known as lipid I. The chain is Phospho-N-acetylmuramoyl-pentapeptide-transferase from Chlorobium luteolum (strain DSM 273 / BCRC 81028 / 2530) (Pelodictyon luteolum).